The sequence spans 326 residues: Regulation of nuclear pre-mRNA domain-containing protein 1B (326 aa).

Ser2 carries the N-acetylserine modification. The CID domain maps to 2-133; that stretch reads SSFSESALEK…QLKLSMEDSK (132 aa). Residues 128–144 are compositionally biased toward basic and acidic residues; that stretch reads SMEDSKSPPPKAAEEKK. The segment at 128 to 148 is disordered; the sequence is SMEDSKSPPPKAAEEKKSLKR. Phosphoserine occurs at positions 132 and 134. Tyr161 carries the phosphotyrosine modification. Phosphoserine is present on residues Ser166 and Ser299.

This sequence belongs to the UPF0400 (RTT103) family. As to quaternary structure, homodimer. May form a heterodimer with RPRD1A. Associates with RPAP2. Associates with the RNA polymerase II complex. As to expression, widely expressed in the adult with highest levels in liver, colon, prostate and uterus and lowest levels in heart and kidney. Not detected in rectum.

The protein resides in the nucleus. In terms of biological role, interacts with phosphorylated C-terminal heptapeptide repeat domain (CTD) of the largest RNA polymerase II subunit POLR2A, and participates in dephosphorylation of the CTD by RPAP2. Transcriptional regulator which enhances expression of CCND1. Promotes binding of RNA polymerase II to the CCDN1 promoter and to the termination region before the poly-A site but decreases its binding after the poly-A site. Prevents RNA polymerase II from reading through the 3' end termination site and may allow it to be recruited back to the promoter through promotion of the formation of a chromatin loop. Also enhances the transcription of a number of other cell cycle-related genes including CDK2, CDK4, CDK6 and cyclin-E but not CDKN1A, CDKN1B or cyclin-A. Promotes cell proliferation. The protein is Regulation of nuclear pre-mRNA domain-containing protein 1B (Rprd1b) of Mus musculus (Mouse).